The primary structure comprises 1276 residues: cGMP-specific 3',5'-cyclic phosphodiesterase (1276 aa).

Disordered stretches follow at residues 1–76 (MHEL…TAAG), 91–185 (NQVK…QQDV), and 241–260 (ASPT…SASS). Composition is skewed to low complexity over residues 12 to 47 (SSSS…SSAS) and 57 to 76 (TSTA…TAAG). Residues 109–124 (APYPPVPAAKPKPTPT) are compositionally biased toward pro residues. A compositionally biased stretch (basic and acidic residues) spans 129–140 (SKFKSTSREVDV). A compositionally biased stretch (polar residues) spans 147-166 (ARSSTISPGVSIHTQTIQQE). 2 stretches are compositionally biased toward low complexity: residues 167–180 (SSSA…SSSS) and 249–260 (SPRSLSNSSASS). GAF domains follow at residues 290–442 (DIDV…GIGI) and 474–658 (NLEC…GLGI). A PDEase domain is found at 688–1119 (SQDQTEKLTQ…RNWQDLAEKV (432 aa)). Residue histidine 764 is the Proton donor of the active site. A divalent metal cation-binding residues include histidine 768, histidine 804, aspartate 805, and aspartate 1023. 2 disordered regions span residues 1162–1193 (AQHG…TGAL) and 1205–1276 (LYNS…CSLL). 2 stretches are compositionally biased toward basic and acidic residues: residues 1171–1180 (DDSHTPEHQR) and 1221–1233 (LESH…DDKS). Low complexity predominate over residues 1248–1263 (GRMSASSSTSSAGTVV). Over residues 1266–1276 (SKKRSKLCSLL) the composition is skewed to basic residues. Cysteine 1273 is modified (cysteine methyl ester). Cysteine 1273 is lipidated: S-farnesyl cysteine. A propeptide spans 1274 to 1276 (SLL) (removed in mature form).

Belongs to the cyclic nucleotide phosphodiesterase family. Interacts with PrBP. A divalent metal cation is required as a cofactor.

It localises to the cell membrane. It catalyses the reaction 3',5'-cyclic GMP + H2O = GMP + H(+). Has a role regulating cGMP transport in Malpighian tubule principal cells. This chain is cGMP-specific 3',5'-cyclic phosphodiesterase, found in Drosophila persimilis (Fruit fly).